A 594-amino-acid polypeptide reads, in one-letter code: NADH-quinone oxidoreductase subunit C/D (594 aa).

The segment at 1–185 (MTTGSALYIP…DPFSLNLAKQ (185 aa)) is NADH dehydrogenase I subunit C. The interval 209-594 (DYMFLNLGPN…IDFVMADVDR (386 aa)) is NADH dehydrogenase I subunit D.

The protein in the N-terminal section; belongs to the complex I 30 kDa subunit family. It in the C-terminal section; belongs to the complex I 49 kDa subunit family. In terms of assembly, NDH-1 is composed of 13 different subunits. Subunits NuoB, CD, E, F, and G constitute the peripheral sector of the complex.

Its subcellular location is the cell inner membrane. The catalysed reaction is a quinone + NADH + 5 H(+)(in) = a quinol + NAD(+) + 4 H(+)(out). NDH-1 shuttles electrons from NADH, via FMN and iron-sulfur (Fe-S) centers, to quinones in the respiratory chain. The immediate electron acceptor for the enzyme in this species is believed to be ubiquinone. Couples the redox reaction to proton translocation (for every two electrons transferred, four hydrogen ions are translocated across the cytoplasmic membrane), and thus conserves the redox energy in a proton gradient. This is NADH-quinone oxidoreductase subunit C/D from Pseudomonas fluorescens (strain SBW25).